We begin with the raw amino-acid sequence, 108 residues long: UPF0060 membrane protein YnfA (108 aa).

Residues 1 to 5 (MIKTT) lie on the Periplasmic side of the membrane. The helical transmembrane segment at 6-26 (LLFFATALCEIIGCFLPWLWL) threads the bilayer. Topologically, residues 27 to 30 (KRNA) are cytoplasmic. A helical membrane pass occupies residues 31-51 (SIWLLLPAGISLALFVWLLTL). The Periplasmic segment spans residues 52-60 (HPAASGRVY). A helical transmembrane segment spans residues 61–81 (AAYGGVYVCTALMWLRVVDGV). Over 82–84 (KLT) the chain is Cytoplasmic. A helical membrane pass occupies residues 85-105 (LYDWTGALIALCGMLIIVAGW). The Periplasmic segment spans residues 106–108 (GRT).

It belongs to the UPF0060 family.

The protein localises to the cell inner membrane. This Escherichia coli O139:H28 (strain E24377A / ETEC) protein is UPF0060 membrane protein YnfA.